Consider the following 210-residue polypeptide: Uracil phosphoribosyltransferase (210 aa).

Residues Arg80, Arg105, and 132-140 (DPMLATGGS) each bind 5-phospho-alpha-D-ribose 1-diphosphate. Uracil is bound by residues Ile195 and 200-202 (GDA). Asp201 is a 5-phospho-alpha-D-ribose 1-diphosphate binding site.

This sequence belongs to the UPRTase family. Requires Mg(2+) as cofactor.

The catalysed reaction is UMP + diphosphate = 5-phospho-alpha-D-ribose 1-diphosphate + uracil. It participates in pyrimidine metabolism; UMP biosynthesis via salvage pathway; UMP from uracil: step 1/1. Its activity is regulated as follows. Allosterically activated by GTP. Its function is as follows. Catalyzes the conversion of uracil and 5-phospho-alpha-D-ribose 1-diphosphate (PRPP) to UMP and diphosphate. This Caldanaerobacter subterraneus subsp. tengcongensis (strain DSM 15242 / JCM 11007 / NBRC 100824 / MB4) (Thermoanaerobacter tengcongensis) protein is Uracil phosphoribosyltransferase.